The chain runs to 378 residues: Integrator complex assembly factor WDR73 (378 aa).

6 WD repeats span residues 73–113 (DFKV…VWQV), 121–163 (KAVS…VVDL), 167–205 (KTTYTSDVSDSEELSSLQVLDADTFAFCCASGRLGLVDT), 214–255 (NRSP…LLDP), 266–305 (QCPVSVPSPDPELLRVTWAPGLKNCLAISGFDGTVQVYDA), and 322–371 (EPLF…VWDW).

The protein belongs to the WD repeat WDR73 family. In terms of assembly, interacts with INTS9 and INTS11; the interaction is direct. Part of the multiprotein complex composed of BRAT1, WDR73, as well as integrator complex subunits INTS9 and INTS11. Expressed in kidney and brain. In the kidney, expressed in glomeruli, most probably in podocytes, and in tubules (at protein level). In the brain, expressed in the cerebellum, with high levels in Purkinje cells and their projecting axons, in the deep cerebellar nuclei and in pyramidal neurons of the cerebral cortex (at protein level). In the white matter, mainly present in astrocytes, but not in oligodendrocytes (at protein level). Also highly expressed in endothelial cells of cerebral capillaries (at protein level).

Its subcellular location is the cytoplasm. The protein localises to the cytoskeleton. The protein resides in the spindle. It localises to the spindle pole. It is found in the cleavage furrow. Functionally, component of a multiprotein complex required for the assembly of the RNA endonuclease module of the integrator complex. Associates with INTS9 and INTS11 in the cytoplasm, stabilizing the INTS9-INTS11 heterodimer and blocking the active site of INTS11. BRAT1 then joins the complex and plugs the active site of INTS11, leading to WDR73 release and nuclear import of INTS9 and INTS11. This is Integrator complex assembly factor WDR73 from Homo sapiens (Human).